A 38-amino-acid chain; its full sequence is Photosystem II reaction center protein L (38 aa).

Residues 17 to 37 (SLFWGLLLIFVLAVLFSSYFF) traverse the membrane as a helical segment.

The protein belongs to the PsbL family. PSII is composed of 1 copy each of membrane proteins PsbA, PsbB, PsbC, PsbD, PsbE, PsbF, PsbH, PsbI, PsbJ, PsbK, PsbL, PsbM, PsbT, PsbX, PsbY, PsbZ, Psb30/Ycf12, at least 3 peripheral proteins of the oxygen-evolving complex and a large number of cofactors. It forms dimeric complexes.

Its subcellular location is the plastid. The protein resides in the chloroplast thylakoid membrane. One of the components of the core complex of photosystem II (PSII). PSII is a light-driven water:plastoquinone oxidoreductase that uses light energy to abstract electrons from H(2)O, generating O(2) and a proton gradient subsequently used for ATP formation. It consists of a core antenna complex that captures photons, and an electron transfer chain that converts photonic excitation into a charge separation. This subunit is found at the monomer-monomer interface and is required for correct PSII assembly and/or dimerization. The polypeptide is Photosystem II reaction center protein L (Gracilaria tenuistipitata var. liui (Red alga)).